We begin with the raw amino-acid sequence, 119 residues long: Hydrogenase maturation factor HypA (119 aa).

H2 is a Ni(2+) binding site. Residues C73, C76, C89, and C92 each coordinate Zn(2+).

It belongs to the HypA/HybF family.

Involved in the maturation of [NiFe] hydrogenases. Required for nickel insertion into the metal center of the hydrogenase. In Dehalococcoides mccartyi (strain ATCC BAA-2266 / KCTC 15142 / 195) (Dehalococcoides ethenogenes (strain 195)), this protein is Hydrogenase maturation factor HypA.